The chain runs to 338 residues: MYG1 protein YER156C (338 aa).

The protein belongs to the MYG1 family.

The sequence is that of MYG1 protein YER156C from Saccharomyces cerevisiae (strain ATCC 204508 / S288c) (Baker's yeast).